A 369-amino-acid polypeptide reads, in one-letter code: UDP-N-acetyl-3-dehydro-alpha-D-glucosamine 3-aminotranferase (369 aa).

An N6-(pyridoxal phosphate)lysine modification is found at Lys-190.

The protein belongs to the DegT/DnrJ/EryC1 family. The cofactor is pyridoxal 5'-phosphate.

The catalysed reaction is UDP-2-acetamido-3-amino-2,3-dideoxy-alpha-D-glucopyranose + 2-oxoglutarate = UDP-2-acetamido-3-dehydro-2-deoxy-alpha-D-glucopyranose + L-glutamate. It functions in the pathway bacterial outer membrane biogenesis; LPS lipid A biosynthesis. Its function is as follows. Aminotranferase involved in the synthesis of 2,3-diamino-2,3-dideoxy-D-glucopyranose (GlcN3N), which is a component of lipid A in some species. Catalyzes the amination of UDP-2-acetamido-3-dehydro-2-deoxy-alpha-D-glucopyranose (UDP-3-oxo-GlcNAc) to UDP-2-acetamido-3-amino-2,3-dideoxy-alpha-D-glucopyranose (UDP-GlcNAc3N), using L-glutamate as the amine donor. Other amine donors, such as alanine and glutamine, can substitute for glutamate, but product formation is slower. This is UDP-N-acetyl-3-dehydro-alpha-D-glucosamine 3-aminotranferase from Acidithiobacillus ferrooxidans (strain ATCC 23270 / DSM 14882 / CIP 104768 / NCIMB 8455) (Ferrobacillus ferrooxidans (strain ATCC 23270)).